We begin with the raw amino-acid sequence, 454 residues long: Laccase-3 (454 aa).

2 Plastocyanin-like domains span residues 1 to 95 and 101 to 252; these read PGPT…GPAT and DLGV…YSGA. N-linked (GlcNAc...) asparagine glycosylation is present at asparagine 24. Cu cation-binding residues include histidine 29, histidine 31, histidine 73, and histidine 75. 5 N-linked (GlcNAc...) asparagine glycosylation sites follow: asparagine 138, asparagine 169, asparagine 218, asparagine 314, and asparagine 334. Residues 319-454 form the Plastocyanin-like 3 domain; it reads DVDWKKPILQ…SEGLAVQFQG (136 aa). 3 residues coordinate Cu cation: histidine 375, histidine 378, and histidine 380. A glycan (N-linked (GlcNAc...) asparagine) is linked at asparagine 395. Cu cation is bound by residues histidine 437, cysteine 438, histidine 439, and histidine 443.

Belongs to the multicopper oxidase family. The cofactor is Cu cation.

Its subcellular location is the secreted. The enzyme catalyses 4 hydroquinone + O2 = 4 benzosemiquinone + 2 H2O. Lignin degradation and detoxification of lignin-derived products. The protein is Laccase-3 (lcc3) of Botryotinia fuckeliana (Noble rot fungus).